The sequence spans 239 residues: Ribose-5-phosphate isomerase A (239 aa).

Residues 40-43, 96-99, and 110-113 contribute to the substrate site; these read SGST, DGAD, and KGGG. Glu-119 serves as the catalytic Proton acceptor. Position 137 (Lys-137) interacts with substrate.

Belongs to the ribose 5-phosphate isomerase family. In terms of assembly, homodimer.

The enzyme catalyses aldehydo-D-ribose 5-phosphate = D-ribulose 5-phosphate. Its pathway is carbohydrate degradation; pentose phosphate pathway; D-ribose 5-phosphate from D-ribulose 5-phosphate (non-oxidative stage): step 1/1. Its function is as follows. Catalyzes the reversible conversion of ribose-5-phosphate to ribulose 5-phosphate. This is Ribose-5-phosphate isomerase A from Methanococcus maripaludis (strain C7 / ATCC BAA-1331).